The primary structure comprises 485 residues: Acyl transferase 1 (485 aa).

His-172 (proton acceptor) is an active-site residue.

It belongs to the plant acyltransferase family. As to expression, highly expressed in young panicles. Expressed in leaf sheaths and panicles.

Involved in defense against pathogens. May contribute to disease resistance by potentiating disease resistance signaling, or producing phytoalexin-like secondary products. The polypeptide is Acyl transferase 1 (Oryza sativa subsp. japonica (Rice)).